A 292-amino-acid chain; its full sequence is uncharacterized protein (292 aa).

Residue Lys-8 forms a Glycyl lysine isopeptide (Lys-Gly) (interchain with G-Cter in SUMO2) linkage. The interval 47–67 is disordered; sequence TKRKMLPSSSSRMRSDGFDEE. A Glycyl lysine isopeptide (Lys-Gly) (interchain with G-Cter in SUMO2) cross-link involves residue Lys-76. A Phosphothreonine modification is found at Asn-94. Phosphoserine occurs at positions 96 and 97. The interval 122–292 is disordered; it reads ETDSDQQDIT…ERSAESSEDD (171 aa). Phosphothreonine is present on Thr-123. Phosphoserine occurs at positions 125 and 126. Polar residues predominate over residues 128–140; it reads QDITNGKKTSPQV. The segment covering 147–173 has biased composition (basic residues); sequence SRKHKKSKKSHKKKQKKRSHKKQKKSK. Residues 180–194 are compositionally biased toward polar residues; the sequence is TADSSSEFSEETGAS. Composition is skewed to basic residues over residues 197-215 and 247-259; these read RKGK…KSLK and KKTK…KKAH. The span at 280–292 shows a compositional bias: basic and acidic residues; sequence ATDERSAESSEDD.

This is an uncharacterized protein from Homo sapiens (Human).